The following is a 492-amino-acid chain: 3-octaprenyl-4-hydroxybenzoate carboxy-lyase (492 aa).

Asn-175 provides a ligand contact to Mn(2+). Residues 178–180 (IYR), 192–194 (RWL), and 197–198 (RG) contribute to the prenylated FMN site. Glu-241 provides a ligand contact to Mn(2+). The active-site Proton donor is the Asp-290.

This sequence belongs to the UbiD family. In terms of assembly, homohexamer. The cofactor is prenylated FMN. Mn(2+) serves as cofactor.

The protein resides in the cell membrane. The catalysed reaction is a 4-hydroxy-3-(all-trans-polyprenyl)benzoate + H(+) = a 2-(all-trans-polyprenyl)phenol + CO2. It functions in the pathway cofactor biosynthesis; ubiquinone biosynthesis. Functionally, catalyzes the decarboxylation of 3-octaprenyl-4-hydroxy benzoate to 2-octaprenylphenol, an intermediate step in ubiquinone biosynthesis. The sequence is that of 3-octaprenyl-4-hydroxybenzoate carboxy-lyase from Salmonella paratyphi A (strain ATCC 9150 / SARB42).